Here is a 278-residue protein sequence, read N- to C-terminus: 3-oxoacyl-[acyl-carrier-protein] reductase (278 aa).

T13, R14, I16, S36, S40, T44, D66, F67, E77, G122, Q125, and E126 together coordinate NADP(+). S182 serves as the catalytic Proton donor. The NADP(+) site is built by Y198, K202, L230, and V231. Catalysis depends on Y198, which acts as the Proton acceptor. Residue K202 is the Lowers pKa of active site Tyr of the active site.

Belongs to the short-chain dehydrogenases/reductases (SDR) family.

The protein resides in the mitochondrion. The catalysed reaction is a (3R)-hydroxyacyl-[ACP] + NADP(+) = a 3-oxoacyl-[ACP] + NADPH + H(+). It functions in the pathway lipid metabolism; fatty acid biosynthesis. Involved in biosynthesis of fatty acids in mitochondria. The sequence is that of 3-oxoacyl-[acyl-carrier-protein] reductase (OAR1) from Saccharomyces cerevisiae (strain ATCC 204508 / S288c) (Baker's yeast).